Reading from the N-terminus, the 415-residue chain is Gamma-glutamyl phosphate reductase (415 aa).

This sequence belongs to the gamma-glutamyl phosphate reductase family.

It localises to the cytoplasm. It catalyses the reaction L-glutamate 5-semialdehyde + phosphate + NADP(+) = L-glutamyl 5-phosphate + NADPH + H(+). Its pathway is amino-acid biosynthesis; L-proline biosynthesis; L-glutamate 5-semialdehyde from L-glutamate: step 2/2. In terms of biological role, catalyzes the NADPH-dependent reduction of L-glutamate 5-phosphate into L-glutamate 5-semialdehyde and phosphate. The product spontaneously undergoes cyclization to form 1-pyrroline-5-carboxylate. The protein is Gamma-glutamyl phosphate reductase of Lachnospira eligens (strain ATCC 27750 / DSM 3376 / VPI C15-48 / C15-B4) (Eubacterium eligens).